The following is a 272-amino-acid chain: Transcription factor GAL1 (272 aa).

Positions 1-10 are enriched in polar residues; the sequence is MAGKNMSSRL. Disordered stretches follow at residues 1–49, 102–215, and 246–272; these read MAGK…SPET, YGAI…SRDI, and KGHL…AMDY. Acidic residues-rich tracts occupy residues 113 to 122 and 152 to 174; these read ESDDDQDEEQ and SEQD…DEAE. Basic and acidic residues predominate over residues 175–215; that stretch reads LLIKAERKEAAAKLRAERKAQRKADEVKSKQMAERRRSRDI. The segment at 240–255 adopts a CCHC-type zinc-finger fold; sequence CHVCGQKGHLQKDCPD.

It localises to the nucleus. Functionally, transcription factor; part of the gene cluster that mediates the biosynthesis of liamocins, glycolipids (also called heavy oils) composed of a single mannitol or arabitol headgroup linked to either three, four or even six 3,5-dihydroxydecanoic ester tail-groups. Positively regulates the expression of PKS1 and EST1 that mediate the biosynthesis of liamocins. This Aureobasidium melanogenum (Aureobasidium pullulans var. melanogenum) protein is Transcription factor GAL1.